A 397-amino-acid chain; its full sequence is Phosphoglycerate kinase (397 aa).

Residues 25–27 (DLN), Arg-41, 64–67 (HLGR), Arg-118, and Arg-151 each bind substrate. Residues Lys-202, Glu-324, and 350 to 353 (GGDT) contribute to the ATP site.

The protein belongs to the phosphoglycerate kinase family. In terms of assembly, monomer.

It is found in the cytoplasm. It catalyses the reaction (2R)-3-phosphoglycerate + ATP = (2R)-3-phospho-glyceroyl phosphate + ADP. The protein operates within carbohydrate degradation; glycolysis; pyruvate from D-glyceraldehyde 3-phosphate: step 2/5. This is Phosphoglycerate kinase from Paracidovorax citrulli (strain AAC00-1) (Acidovorax citrulli).